The primary structure comprises 144 residues: Deoxyuridine 5'-triphosphate nucleotidohydrolase (144 aa).

Substrate contacts are provided by residues 63–65 (RSG), Asn76, and 80–82 (TID).

It belongs to the dUTPase family. Mg(2+) serves as cofactor.

The catalysed reaction is dUTP + H2O = dUMP + diphosphate + H(+). It functions in the pathway pyrimidine metabolism; dUMP biosynthesis; dUMP from dCTP (dUTP route): step 2/2. In terms of biological role, this enzyme is involved in nucleotide metabolism: it produces dUMP, the immediate precursor of thymidine nucleotides and it decreases the intracellular concentration of dUTP so that uracil cannot be incorporated into DNA. The protein is Deoxyuridine 5'-triphosphate nucleotidohydrolase of Bacteroides thetaiotaomicron (strain ATCC 29148 / DSM 2079 / JCM 5827 / CCUG 10774 / NCTC 10582 / VPI-5482 / E50).